Reading from the N-terminus, the 264-residue chain is Neuferricin (264 aa).

Positions 1–22 are cleaved as a signal peptide; the sequence is MLRCGGRGLLLGLAVAAAAVMA. One can recognise a Cytochrome b5 heme-binding domain in the interval 35 to 134; sequence FRLFIPEELS…KNYVCVGRVT (100 aa).

Belongs to the cytochrome b5 family. MAPR subfamily.

The protein resides in the secreted. In terms of biological role, heme-binding protein which promotes neuronal but not astrocyte differentiation. The sequence is that of Neuferricin from Homo sapiens (Human).